The primary structure comprises 232 residues: EEF1A lysine methyltransferase 3 (232 aa).

S-adenosyl-L-methionine contacts are provided by residues W57, 83-85, D104, W133, and A150; that span reads GAG.

The protein belongs to the methyltransferase superfamily. METTL21 family. As to quaternary structure, interacts with members of the heat shock protein 70 and 90 families and of the TCP-1 chaperonin family, as well as with HSPD1, STIP1 and tubulin; at least some of these proteins may be methylation substrates.

It is found in the cytoplasm. The protein resides in the cytoskeleton. The protein localises to the microtubule organizing center. Its subcellular location is the centrosome. It carries out the reaction L-lysyl-[protein] + 3 S-adenosyl-L-methionine = N(6),N(6),N(6)-trimethyl-L-lysyl-[protein] + 3 S-adenosyl-L-homocysteine + 3 H(+). The enzyme catalyses L-lysyl-[protein] + S-adenosyl-L-methionine = N(6)-methyl-L-lysyl-[protein] + S-adenosyl-L-homocysteine + H(+). The catalysed reaction is N(6)-methyl-L-lysyl-[protein] + S-adenosyl-L-methionine = N(6),N(6)-dimethyl-L-lysyl-[protein] + S-adenosyl-L-homocysteine + H(+). It catalyses the reaction N(6),N(6)-dimethyl-L-lysyl-[protein] + S-adenosyl-L-methionine = N(6),N(6),N(6)-trimethyl-L-lysyl-[protein] + S-adenosyl-L-homocysteine + H(+). Protein-lysine methyltransferase that selectively mono-, di- and trimethylates 'Lys-165' of the translation elongation factors EEF1A1 and EEF1A2 in an aminoacyl-tRNA and GTP-dependent manner. EEF1A1 methylation by EEF1AKMT3 is dynamic as well as inducible by stress conditions, such as ER-stress, and plays a regulatory role on mRNA translation. In Mus musculus (Mouse), this protein is EEF1A lysine methyltransferase 3.